Consider the following 104-residue polypeptide: Enhancer of rudimentary homolog (104 aa).

The residue at position 2 (S2) is an N-acetylserine. T11 carries the post-translational modification Phosphothreonine. K12 participates in a covalent cross-link: Glycyl lysine isopeptide (Lys-Gly) (interchain with G-Cter in SUMO2).

The protein belongs to the E(R) family. As to quaternary structure, homodimer.

It is found in the nucleus. Functionally, may have a role in the cell cycle. This chain is Enhancer of rudimentary homolog (ERH), found in Bos taurus (Bovine).